The sequence spans 121 residues: Large ribosomal subunit protein bL12 (121 aa).

This sequence belongs to the bacterial ribosomal protein bL12 family. Homodimer. Part of the ribosomal stalk of the 50S ribosomal subunit. Forms a multimeric L10(L12)X complex, where L10 forms an elongated spine to which 2 to 4 L12 dimers bind in a sequential fashion. Binds GTP-bound translation factors.

Forms part of the ribosomal stalk which helps the ribosome interact with GTP-bound translation factors. Is thus essential for accurate translation. The sequence is that of Large ribosomal subunit protein bL12 from Serratia proteamaculans (strain 568).